The sequence spans 444 residues: Deoxyguanosinetriphosphate triphosphohydrolase-like protein (444 aa).

The interval 1–26 (MIASPWHERRLNEDKKRRNDHRSPFQ) is disordered. Positions 59–250 (RLTHSLEVSQ…MELADDIAYA (192 aa)) constitute an HD domain.

Belongs to the dGTPase family. Type 2 subfamily.

This Shewanella woodyi (strain ATCC 51908 / MS32) protein is Deoxyguanosinetriphosphate triphosphohydrolase-like protein.